A 702-amino-acid chain; its full sequence is MELSKGNIVNLNDTAYYNNRELSWLAFNERVLQEAQDETNPLLERLKFISIFSSNLDEFFMVRVAGLKDQVSAGFNQPENKAGLTPKKQLNKIAIKAHELMTVQYGTFKNYVLPALELEGIERLTFHDLTKEQREFIEEYFDEQIFPVLTPVAIDAYRPFPMLLNKSLNLATLLYDEKQVEEENRTKLGIVQVPSLLERFIFLPSEGQKHKFILLEDVISSFTHKLFTGYKVSSVTRFRITRNADLTIHEEGARDLLKVIEKELKKRKWGAAVRLEVGKEHIDERVLALLYEVLEVKDEDVYIMDGPLDLTCLFSLYKKLAPLYEHLVYPALIPQRPQDLGDAEDVFEKAIEHDILLHHPFESFQPVVDFVRDAADDPNVLAIKQTLYRVSGDSPIIQALKIAAEKGKQVTVLVELKARFDEENNVHWAKELEQAGCHVIYGVSHLKTHSKITLVVRRKNGKIERFVHLGTGNYNDATAKLYTDFGYITSRKDFGVDATNFFNYLSGYTTKPHFHHLSVAPFDIREQFMDLIDEEIRYHRQYGNGYIIAKMNSLTDKPLIKKMYEASQAGVKVELIVRGTCCLRPGIPNVSENIRVVSVVGRYLEHSRIYYFHHNGEEKIYLSSADWMTRNMEKRVEISFPILDIEMKARIKAILQLTLADNVKTREQNKDGDYYYVINSGAEEIDSQVKLFKMAYQNTDAE.

ATP is bound at residue Asn55. Mg(2+) contacts are provided by Arg389 and Arg419. His449 acts as the Phosphohistidine intermediate in catalysis. Tyr482, Arg578, and His606 together coordinate ATP.

Belongs to the polyphosphate kinase 1 (PPK1) family. Mg(2+) is required as a cofactor. An intermediate of this reaction is the autophosphorylated ppk in which a phosphate is covalently linked to a histidine residue through a N-P bond.

It catalyses the reaction [phosphate](n) + ATP = [phosphate](n+1) + ADP. Its function is as follows. Catalyzes the reversible transfer of the terminal phosphate of ATP to form a long-chain polyphosphate (polyP). The polypeptide is Polyphosphate kinase (Bacillus anthracis).